A 195-amino-acid polypeptide reads, in one-letter code: Putative 3-methyladenine DNA glycosylase (195 aa).

The protein belongs to the DNA glycosylase MPG family.

In Synechococcus sp. (strain JA-3-3Ab) (Cyanobacteria bacterium Yellowstone A-Prime), this protein is Putative 3-methyladenine DNA glycosylase.